Reading from the N-terminus, the 317-residue chain is tRNA dimethylallyltransferase (317 aa).

ATP is bound at residue 14–21 (GPTASGKT). 16–21 (TASGKT) is a substrate binding site. 3 interaction with substrate tRNA regions span residues 39–42 (DSAL), 163–167 (QRIQR), and 248–253 (RCVGYR).

Belongs to the IPP transferase family. In terms of assembly, monomer. The cofactor is Mg(2+).

The enzyme catalyses adenosine(37) in tRNA + dimethylallyl diphosphate = N(6)-dimethylallyladenosine(37) in tRNA + diphosphate. Functionally, catalyzes the transfer of a dimethylallyl group onto the adenine at position 37 in tRNAs that read codons beginning with uridine, leading to the formation of N6-(dimethylallyl)adenosine (i(6)A). The chain is tRNA dimethylallyltransferase from Paraburkholderia phymatum (strain DSM 17167 / CIP 108236 / LMG 21445 / STM815) (Burkholderia phymatum).